A 359-amino-acid chain; its full sequence is F-box/kelch-repeat protein At1g15670 (359 aa).

In terms of domain architecture, F-box spans 2–49 (ELIPDLPETVAYECLLRSSYKQFPLMASVCKLWQREISLSDFFRHRKA). 5 Kelch repeats span residues 119 to 167 (DLVV…ASDS), 170 to 217 (NVFV…FHAG), 219 to 269 (FHVI…CAAG), 271 to 310 (NGDLYACCRRDLMMMKDDTWYKVGNLPADVCNVSYVAIRR), and 313 to 358 (NLVV…CFLE).

This is F-box/kelch-repeat protein At1g15670 from Arabidopsis thaliana (Mouse-ear cress).